The chain runs to 448 residues: N-succinylarginine dihydrolase (448 aa).

Residues 19 to 28 (GGLSYGNVAS), Asn110, and 137 to 138 (HR) each bind substrate. Glu174 is an active-site residue. Substrate is bound at residue Arg214. His250 is an active-site residue. Asp252 and Asn365 together coordinate substrate. Catalysis depends on Cys371, which acts as the Nucleophile.

It belongs to the succinylarginine dihydrolase family. Homodimer.

It catalyses the reaction N(2)-succinyl-L-arginine + 2 H2O + 2 H(+) = N(2)-succinyl-L-ornithine + 2 NH4(+) + CO2. It functions in the pathway amino-acid degradation; L-arginine degradation via AST pathway; L-glutamate and succinate from L-arginine: step 2/5. Catalyzes the hydrolysis of N(2)-succinylarginine into N(2)-succinylornithine, ammonia and CO(2). This Pseudomonas aeruginosa (strain UCBPP-PA14) protein is N-succinylarginine dihydrolase.